A 1408-amino-acid polypeptide reads, in one-letter code: DNA-directed RNA polymerase subunit beta' (1408 aa).

Positions 70, 72, 85, and 88 each coordinate Zn(2+). Mg(2+) is bound by residues Asp460, Asp462, and Asp464. Residues Cys822, Cys896, Cys903, and Cys906 each contribute to the Zn(2+) site. Positions 1386 to 1408 are disordered; the sequence is DTGEAPPLSEEETGEIRNSGYAV.

This sequence belongs to the RNA polymerase beta' chain family. In terms of assembly, the RNAP catalytic core consists of 2 alpha, 1 beta, 1 beta' and 1 omega subunit. When a sigma factor is associated with the core the holoenzyme is formed, which can initiate transcription. Mg(2+) serves as cofactor. It depends on Zn(2+) as a cofactor.

The enzyme catalyses RNA(n) + a ribonucleoside 5'-triphosphate = RNA(n+1) + diphosphate. In terms of biological role, DNA-dependent RNA polymerase catalyzes the transcription of DNA into RNA using the four ribonucleoside triphosphates as substrates. The protein is DNA-directed RNA polymerase subunit beta' of Nitrosospira multiformis (strain ATCC 25196 / NCIMB 11849 / C 71).